The primary structure comprises 233 residues: Biosynthetic peptidoglycan transglycosylase (233 aa).

A helical transmembrane segment spans residues 17-37; sequence IVLAVLALVILPYALIFFYVL.

The protein belongs to the glycosyltransferase 51 family.

It is found in the cell inner membrane. The catalysed reaction is [GlcNAc-(1-&gt;4)-Mur2Ac(oyl-L-Ala-gamma-D-Glu-L-Lys-D-Ala-D-Ala)](n)-di-trans,octa-cis-undecaprenyl diphosphate + beta-D-GlcNAc-(1-&gt;4)-Mur2Ac(oyl-L-Ala-gamma-D-Glu-L-Lys-D-Ala-D-Ala)-di-trans,octa-cis-undecaprenyl diphosphate = [GlcNAc-(1-&gt;4)-Mur2Ac(oyl-L-Ala-gamma-D-Glu-L-Lys-D-Ala-D-Ala)](n+1)-di-trans,octa-cis-undecaprenyl diphosphate + di-trans,octa-cis-undecaprenyl diphosphate + H(+). It participates in cell wall biogenesis; peptidoglycan biosynthesis. Peptidoglycan polymerase that catalyzes glycan chain elongation from lipid-linked precursors. This Rhizobium leguminosarum bv. trifolii (strain WSM2304) protein is Biosynthetic peptidoglycan transglycosylase.